Here is a 448-residue protein sequence, read N- to C-terminus: Asparagine--tRNA ligase (448 aa).

It belongs to the class-II aminoacyl-tRNA synthetase family. Homodimer.

It localises to the cytoplasm. The catalysed reaction is tRNA(Asn) + L-asparagine + ATP = L-asparaginyl-tRNA(Asn) + AMP + diphosphate + H(+). The sequence is that of Asparagine--tRNA ligase from Streptococcus pyogenes serotype M2 (strain MGAS10270).